We begin with the raw amino-acid sequence, 38 residues long: Photosystem II reaction center protein M (38 aa).

The helical transmembrane segment at 7 to 27 threads the bilayer; the sequence is GFVASILFVLVPTVFLLILYI.

It belongs to the PsbM family. PSII is composed of 1 copy each of membrane proteins PsbA, PsbB, PsbC, PsbD, PsbE, PsbF, PsbH, PsbI, PsbJ, PsbK, PsbL, PsbM, PsbT, PsbX, PsbY, PsbZ, Psb30/Ycf12, peripheral proteins PsbO, CyanoQ (PsbQ), PsbU, PsbV and a large number of cofactors. It forms dimeric complexes.

It is found in the cellular thylakoid membrane. In terms of biological role, one of the components of the core complex of photosystem II (PSII). PSII is a light-driven water:plastoquinone oxidoreductase that uses light energy to abstract electrons from H(2)O, generating O(2) and a proton gradient subsequently used for ATP formation. It consists of a core antenna complex that captures photons, and an electron transfer chain that converts photonic excitation into a charge separation. This subunit is found at the monomer-monomer interface. The chain is Photosystem II reaction center protein M from Nostoc punctiforme (strain ATCC 29133 / PCC 73102).